The primary structure comprises 476 residues: Bifunctional protein HldE (476 aa).

The interval 1–318 (MFQYSAEFKQ…ENAIHGRSNT (318 aa)) is ribokinase. 195-198 (NMSE) contacts ATP. Residue aspartate 264 is part of the active site. The cytidylyltransferase stretch occupies residues 344–476 (MTNGCFDILH…VISKIQQLKD (133 aa)).

It in the N-terminal section; belongs to the carbohydrate kinase PfkB family. The protein in the C-terminal section; belongs to the cytidylyltransferase family. Homodimer.

It carries out the reaction D-glycero-beta-D-manno-heptose 7-phosphate + ATP = D-glycero-beta-D-manno-heptose 1,7-bisphosphate + ADP + H(+). The catalysed reaction is D-glycero-beta-D-manno-heptose 1-phosphate + ATP + H(+) = ADP-D-glycero-beta-D-manno-heptose + diphosphate. Its pathway is nucleotide-sugar biosynthesis; ADP-L-glycero-beta-D-manno-heptose biosynthesis; ADP-L-glycero-beta-D-manno-heptose from D-glycero-beta-D-manno-heptose 7-phosphate: step 1/4. It functions in the pathway nucleotide-sugar biosynthesis; ADP-L-glycero-beta-D-manno-heptose biosynthesis; ADP-L-glycero-beta-D-manno-heptose from D-glycero-beta-D-manno-heptose 7-phosphate: step 3/4. It participates in bacterial outer membrane biogenesis; LPS core biosynthesis. Functionally, catalyzes the phosphorylation of D-glycero-D-manno-heptose 7-phosphate at the C-1 position to selectively form D-glycero-beta-D-manno-heptose-1,7-bisphosphate. Its function is as follows. Catalyzes the ADP transfer from ATP to D-glycero-beta-D-manno-heptose 1-phosphate, yielding ADP-D-glycero-beta-D-manno-heptose. In Pasteurella multocida (strain Pm70), this protein is Bifunctional protein HldE.